Here is a 1051-residue protein sequence, read N- to C-terminus: Carbamoyl phosphate synthase large chain (1051 aa).

Positions 1–399 (MKETPKKVLV…SLQKAVRMLD (399 aa)) are carboxyphosphate synthetic domain. 12 residues coordinate ATP: arginine 127, arginine 167, glycine 173, glycine 174, lysine 206, leucine 208, glutamate 213, glycine 239, valine 240, histidine 241, glutamine 282, and glutamate 296. Residues 131 to 325 (RETMIENNLP…LAYVSAKLAL (195 aa)) enclose the ATP-grasp 1 domain. The Mg(2+) site is built by glutamine 282, glutamate 296, and asparagine 298. Mn(2+) is bound by residues glutamine 282, glutamate 296, and asparagine 298. The tract at residues 400 to 548 (IGEPGVVGGK…LTYNGTEDDL (149 aa)) is oligomerization domain. The segment at 549–930 (EFSQGNKLLI…LKSWLSSIPN (382 aa)) is carbamoyl phosphate synthetic domain. Residues 673–863 (SKLLDKLGIS…LINESMKAIF (191 aa)) form the ATP-grasp 2 domain. Positions 709, 748, 750, 755, 779, 780, 781, 782, 822, and 834 each coordinate ATP. Mg(2+) contacts are provided by glutamine 822, glutamate 834, and asparagine 836. Residues glutamine 822, glutamate 834, and asparagine 836 each contribute to the Mn(2+) site. An MGS-like domain is found at 930-1051 (NRIPNKNGIA…FEISEYGGGI (122 aa)). The segment at 931–1051 (RIPNKNGIAL…FEISEYGGGI (121 aa)) is allosteric domain.

This sequence belongs to the CarB family. As to quaternary structure, composed of two chains; the small (or glutamine) chain promotes the hydrolysis of glutamine to ammonia, which is used by the large (or ammonia) chain to synthesize carbamoyl phosphate. Tetramer of heterodimers (alpha,beta)4. Mg(2+) serves as cofactor. Mn(2+) is required as a cofactor.

It catalyses the reaction hydrogencarbonate + L-glutamine + 2 ATP + H2O = carbamoyl phosphate + L-glutamate + 2 ADP + phosphate + 2 H(+). The enzyme catalyses hydrogencarbonate + NH4(+) + 2 ATP = carbamoyl phosphate + 2 ADP + phosphate + 2 H(+). The protein operates within amino-acid biosynthesis; L-arginine biosynthesis; carbamoyl phosphate from bicarbonate: step 1/1. Its pathway is pyrimidine metabolism; UMP biosynthesis via de novo pathway; (S)-dihydroorotate from bicarbonate: step 1/3. Large subunit of the glutamine-dependent carbamoyl phosphate synthetase (CPSase). CPSase catalyzes the formation of carbamoyl phosphate from the ammonia moiety of glutamine, carbonate, and phosphate donated by ATP, constituting the first step of 2 biosynthetic pathways, one leading to arginine and/or urea and the other to pyrimidine nucleotides. The large subunit (synthetase) binds the substrates ammonia (free or transferred from glutamine from the small subunit), hydrogencarbonate and ATP and carries out an ATP-coupled ligase reaction, activating hydrogencarbonate by forming carboxy phosphate which reacts with ammonia to form carbamoyl phosphate. The chain is Carbamoyl phosphate synthase large chain from Saccharolobus islandicus (strain M.16.27) (Sulfolobus islandicus).